Consider the following 432-residue polypeptide: Probable rhamnogalacturonase E (432 aa).

The signal sequence occupies residues 1-21; that stretch reads MQSKTFSVLSSCLLLIATVQG. A disulfide bridge links C42 with C68. N-linked (GlcNAc...) asparagine glycans are attached at residues N53, N91, and N106. The active-site Proton donor is the D221. C223 and C240 are disulfide-bonded. Residues N241 and N256 are each glycosylated (N-linked (GlcNAc...) asparagine). The active site involves H296. 2 disulfides stabilise this stretch: C329-C335 and C357-C366.

Belongs to the glycosyl hydrolase 28 family.

Its subcellular location is the secreted. In terms of biological role, pectinolytic enzymes consist of four classes of enzymes: pectine lyase, polygalacturonase, pectin methylesterase and rhamnogalacturonase. Hydrolyzes alpha-D-galacturonopyranosyl-(1,2)-alpha-L-rhamnopyranosyl linkages in the backbone of the hairy regions of pectins. In Aspergillus oryzae (strain ATCC 42149 / RIB 40) (Yellow koji mold), this protein is Probable rhamnogalacturonase E (rhgE).